Consider the following 201-residue polypeptide: Kinetochore protein SPC24 homolog (201 aa).

Positions 78–133 (DIAAEDEIERLQKELDEEMEREFKLKDELRLVADELKDLNAQLSSIDEHKQSTKRK) form a coiled coil.

This sequence belongs to the SPC24 family. Component of the NDC80 complex, which consists of NDC80, NUF2, SPC24 and SPC25. In terms of tissue distribution, highly expressed in actively dividing tissues, such as shoot apical meristem (SAM), root apical meristem (RAM), vasculature, newly emerging leaves and inflorescence shoots.

It is found in the chromosome. It localises to the centromere. Functionally, acts as a component of the essential kinetochore-associated NDC80 complex, which is required for chromosome segregation and spindle checkpoint activity to ensure proper cell division. Required for the maintenance of plant architecture. This Arabidopsis thaliana (Mouse-ear cress) protein is Kinetochore protein SPC24 homolog.